The chain runs to 333 residues: Meiotic recombination protein rec24 (333 aa).

This sequence belongs to the MEI4L family. Interacts with Rec7, as part of the meiotic recombination initiation complex.

It is found in the cytoplasm. It localises to the nucleus. Functionally, required for correct meiotic chromosome segregation and recombination. Accessory protein required for Rec12 activity, which is involved in formation of the double-strand breaks (DSBs) that initiate meiotic recombination. The sequence is that of Meiotic recombination protein rec24 (rec24) from Schizosaccharomyces pombe (strain 972 / ATCC 24843) (Fission yeast).